We begin with the raw amino-acid sequence, 337 residues long: Phenylalanine--tRNA ligase alpha subunit (337 aa).

Glutamate 258 provides a ligand contact to Mg(2+).

It belongs to the class-II aminoacyl-tRNA synthetase family. Phe-tRNA synthetase alpha subunit type 1 subfamily. In terms of assembly, tetramer of two alpha and two beta subunits. Mg(2+) is required as a cofactor.

Its subcellular location is the cytoplasm. The enzyme catalyses tRNA(Phe) + L-phenylalanine + ATP = L-phenylalanyl-tRNA(Phe) + AMP + diphosphate + H(+). This chain is Phenylalanine--tRNA ligase alpha subunit, found in Burkholderia cenocepacia (strain ATCC BAA-245 / DSM 16553 / LMG 16656 / NCTC 13227 / J2315 / CF5610) (Burkholderia cepacia (strain J2315)).